The primary structure comprises 138 residues: DNA-directed RNA polymerase subunit omega (138 aa).

Residues Gly104–Ser138 form a disordered region. A compositionally biased stretch (polar residues) spans Phe126–Ser138.

The protein belongs to the RNA polymerase subunit omega family. In terms of assembly, the RNAP catalytic core consists of 2 alpha, 1 beta, 1 beta' and 1 omega subunit. When a sigma factor is associated with the core the holoenzyme is formed, which can initiate transcription.

It catalyses the reaction RNA(n) + a ribonucleoside 5'-triphosphate = RNA(n+1) + diphosphate. Its function is as follows. Promotes RNA polymerase assembly. Latches the N- and C-terminal regions of the beta' subunit thereby facilitating its interaction with the beta and alpha subunits. This chain is DNA-directed RNA polymerase subunit omega, found in Ehrlichia chaffeensis (strain ATCC CRL-10679 / Arkansas).